A 394-amino-acid chain; its full sequence is RNA binding protein fox-1 homolog 2 (394 aa).

Disordered stretches follow at residues 1–70 (MGRL…DYAG) and 83–135 (TQAH…HVSN). Composition is skewed to polar residues over residues 24–36 (RDSQGNQEPTTTP) and 83–103 (TQAHGEQSSNSPSTQNGSLTT). Low complexity predominate over residues 105–125 (GGAQTDGQQSQTQSSENSESK). Positions 129–205 (KRLHVSNIPF…RKIEVNNATA (77 aa)) constitute an RRM domain. Residue Arg-285 is modified to Omega-N-methylarginine. An asymmetric dimethylarginine mark is found at Arg-301 and Arg-333. Asymmetric dimethylarginine; alternate occurs at positions 385 and 390. Arg-385 and Arg-390 each carry omega-N-methylarginine; alternate.

Interacts with ER-alpha N-terminal activation domain. Interacts with RBPMS; the interaction allows cooperative assembly of stable cell-specific alternative splicing regulatory complexes.

The protein localises to the nucleus. It is found in the cytoplasm. Its function is as follows. RNA-binding protein that regulates alternative splicing events by binding to 5'-UGCAUGU-3' elements. Prevents binding of U2AF2 to the 3'-splice site. Regulates alternative splicing of tissue-specific exons and of differentially spliced exons during erythropoiesis. Seems to act as a coregulatory factor of ER-alpha. Together with RNA binding proteins RBPMS and MBNL1/2, activates vascular smooth muscle cells alternative splicing events. The chain is RNA binding protein fox-1 homolog 2 (RBFOX2) from Bos taurus (Bovine).